Here is a 430-residue protein sequence, read N- to C-terminus: Probable acetate kinase (430 aa).

Position 12 (Asn-12) interacts with Mg(2+). Lys-19 contacts ATP. A substrate-binding site is contributed by Arg-100. The active-site Proton donor/acceptor is the Asp-159. 220–224 serves as a coordination point for ATP; that stretch reads HLGSG. Glu-416 serves as a coordination point for Mg(2+).

It belongs to the acetokinase family. The cofactor is Mg(2+).

It carries out the reaction acetate + ATP = acetyl phosphate + ADP. Its pathway is metabolic intermediate biosynthesis; acetyl-CoA biosynthesis; acetyl-CoA from acetate: step 1/2. The polypeptide is Probable acetate kinase (Cryptococcus neoformans var. neoformans serotype D (strain B-3501A) (Filobasidiella neoformans)).